A 1090-amino-acid chain; its full sequence is ATP-dependent helicase/deoxyribonuclease subunit B (1090 aa).

7-14 is an ATP binding site; the sequence is GPVGSGKS. The [4Fe-4S] cluster site is built by C719, C1035, C1038, and C1044.

The protein belongs to the helicase family. AddB/RexB type 1 subfamily. In terms of assembly, heterodimer of AddA and AddB. Mg(2+) is required as a cofactor. It depends on [4Fe-4S] cluster as a cofactor.

Functionally, the heterodimer acts as both an ATP-dependent DNA helicase and an ATP-dependent, dual-direction single-stranded exonuclease. Recognizes the chi site generating a DNA molecule suitable for the initiation of homologous recombination. The AddB subunit has 5' -&gt; 3' nuclease activity but not helicase activity. This Carboxydothermus hydrogenoformans (strain ATCC BAA-161 / DSM 6008 / Z-2901) protein is ATP-dependent helicase/deoxyribonuclease subunit B.